Reading from the N-terminus, the 643-residue chain is 1-deoxy-D-xylulose-5-phosphate synthase (643 aa).

Residues H72 and 113-115 (GHA) each bind thiamine diphosphate. A Mg(2+)-binding site is contributed by D144. Thiamine diphosphate contacts are provided by residues 145 to 146 (GA), N174, Y287, and E370. N174 is a binding site for Mg(2+).

It belongs to the transketolase family. DXPS subfamily. Homodimer. It depends on Mg(2+) as a cofactor. Thiamine diphosphate serves as cofactor.

The catalysed reaction is D-glyceraldehyde 3-phosphate + pyruvate + H(+) = 1-deoxy-D-xylulose 5-phosphate + CO2. It functions in the pathway metabolic intermediate biosynthesis; 1-deoxy-D-xylulose 5-phosphate biosynthesis; 1-deoxy-D-xylulose 5-phosphate from D-glyceraldehyde 3-phosphate and pyruvate: step 1/1. Its function is as follows. Catalyzes the acyloin condensation reaction between C atoms 2 and 3 of pyruvate and glyceraldehyde 3-phosphate to yield 1-deoxy-D-xylulose-5-phosphate (DXP). In Prochlorococcus marinus (strain SARG / CCMP1375 / SS120), this protein is 1-deoxy-D-xylulose-5-phosphate synthase.